A 254-amino-acid polypeptide reads, in one-letter code: Imidazole glycerol phosphate synthase subunit HisF (254 aa).

Residues D11 and D130 contribute to the active site.

It belongs to the HisA/HisF family. As to quaternary structure, heterodimer of HisH and HisF.

Its subcellular location is the cytoplasm. It carries out the reaction 5-[(5-phospho-1-deoxy-D-ribulos-1-ylimino)methylamino]-1-(5-phospho-beta-D-ribosyl)imidazole-4-carboxamide + L-glutamine = D-erythro-1-(imidazol-4-yl)glycerol 3-phosphate + 5-amino-1-(5-phospho-beta-D-ribosyl)imidazole-4-carboxamide + L-glutamate + H(+). It functions in the pathway amino-acid biosynthesis; L-histidine biosynthesis; L-histidine from 5-phospho-alpha-D-ribose 1-diphosphate: step 5/9. Its function is as follows. IGPS catalyzes the conversion of PRFAR and glutamine to IGP, AICAR and glutamate. The HisF subunit catalyzes the cyclization activity that produces IGP and AICAR from PRFAR using the ammonia provided by the HisH subunit. This is Imidazole glycerol phosphate synthase subunit HisF from Acidiphilium cryptum (strain JF-5).